The primary structure comprises 688 residues: Elongation factor G (688 aa).

A tr-type G domain is found at 6-280; it reads KLFRNFGIMA…AVVDFLPSPI (275 aa). GTP contacts are provided by residues 15 to 22, 79 to 83, and 133 to 136; these read AHIDAGKT, DTPGH, and NKMD.

It belongs to the TRAFAC class translation factor GTPase superfamily. Classic translation factor GTPase family. EF-G/EF-2 subfamily.

It localises to the cytoplasm. Catalyzes the GTP-dependent ribosomal translocation step during translation elongation. During this step, the ribosome changes from the pre-translocational (PRE) to the post-translocational (POST) state as the newly formed A-site-bound peptidyl-tRNA and P-site-bound deacylated tRNA move to the P and E sites, respectively. Catalyzes the coordinated movement of the two tRNA molecules, the mRNA and conformational changes in the ribosome. The protein is Elongation factor G of Ureaplasma urealyticum serovar 10 (strain ATCC 33699 / Western).